Consider the following 396-residue polypeptide: Probable sugar efflux transporter (396 aa).

Transmembrane regions (helical) follow at residues 15–35 (VVTLAIAAFIFNTTEFVPVGL), 50–70 (VGIMLTIYAWVVAVMSLPFML), 81–101 (LICLFVLFIASHVLSFLAWNF), 103–123 (VLVISRIGIAFAHAIFWSITA), 136–156 (AQALSLIATGTALAMVLGLPI), 169–189 (TFFAIGMGALITLLCLIKLLP), 209–229 (PALMSLYVLTVVVVTAHYTAY), 246–266 (FATVLLLILGGAGIIGSLVFG), 275–295 (SLVSIAIALLVVCLLLLLPAA), 301–321 (LAILSIFWGIAIMVIGLGMQV), 333–353 (VAMALFSGIFNIGIGAGALVG), and 364–384 (AIGYIGAIPACAALVWAVLIF).

This sequence belongs to the major facilitator superfamily. SotB (TC 2.A.1.2) family.

Its subcellular location is the cell inner membrane. Its function is as follows. Involved in the efflux of sugars. The physiological role may be the reduction of the intracellular concentration of toxic sugars or sugar metabolites. This is Probable sugar efflux transporter from Salmonella agona (strain SL483).